A 183-amino-acid chain; its full sequence is Large ribosomal subunit protein uL6 (183 aa).

It belongs to the universal ribosomal protein uL6 family. As to quaternary structure, part of the 50S ribosomal subunit.

This protein binds to the 23S rRNA, and is important in its secondary structure. It is located near the subunit interface in the base of the L7/L12 stalk, and near the tRNA binding site of the peptidyltransferase center. The sequence is that of Large ribosomal subunit protein uL6 from Chlamydia muridarum (strain MoPn / Nigg).